Here is a 145-residue protein sequence, read N- to C-terminus: Salt stress-induced protein (145 aa).

One can recognise a Jacalin-type lectin domain in the interval L3–P145. 2 consecutive repeat copies span residues I6–S15 and I54–S64. The interval I6 to S64 is 2 X approximate repeats, Gly-rich.

Sheaths and roots from mature plants and seedlings.

This chain is Salt stress-induced protein (SALT), found in Oryza sativa subsp. indica (Rice).